We begin with the raw amino-acid sequence, 548 residues long: Chaperonin GroEL (548 aa).

Residues 30 to 33 (TLGP), Lys51, 87 to 91 (DGTTT), Gly415, 479 to 481 (NAA), and Asp495 each bind ATP. The disordered stretch occupies residues 526–548 (KEDKSSDLGSAPAGGMGGMGGMM). Over residues 537–548 (PAGGMGGMGGMM) the composition is skewed to gly residues.

This sequence belongs to the chaperonin (HSP60) family. As to quaternary structure, forms a cylinder of 14 subunits composed of two heptameric rings stacked back-to-back. Interacts with the co-chaperonin GroES.

It is found in the cytoplasm. The catalysed reaction is ATP + H2O + a folded polypeptide = ADP + phosphate + an unfolded polypeptide.. In terms of biological role, together with its co-chaperonin GroES, plays an essential role in assisting protein folding. The GroEL-GroES system forms a nano-cage that allows encapsulation of the non-native substrate proteins and provides a physical environment optimized to promote and accelerate protein folding. The polypeptide is Chaperonin GroEL (Buchnera aphidicola subsp. Pterocomma populeum).